A 155-amino-acid polypeptide reads, in one-letter code: MEPQFNNPQERPRSLHHLSEVLEIPLIDLRLSCVYCKKELTRAEVYNFACTELKLVYRDDFPYAVCRVCLLFYSKVRKYRYYDYSVYGATLESITKKQLCDLLIRCYRCQSPLTPEEKQLHCDRKRRFHLIAHGWTGSCLGCWRQTSREPRESTV.

2 zinc fingers span residues 33–69 (CVYC…CRVC) and 106–142 (CYRC…CLGC).

This sequence belongs to the papillomaviridae E6 protein family. In terms of assembly, forms homodimers. Interacts with ubiquitin-protein ligase UBE3A/E6-AP; this interaction stimulates UBE3A ubiquitin activity. Interacts with host TP53 and EP300; this interaction inhibits TP53 activity.

It localises to the host cytoplasm. It is found in the host nucleus. Functionally, this protein has transforming activity in vitro. In terms of biological role, plays a major role in the induction and maintenance of cellular transformation. E6 associates with host UBE3A/E6-AP ubiquitin-protein ligase and modulates its activity. Sequesters tumor suppressor TP53 in the host cytoplasm and modulates its activity by interacting with host EP300 that results in the reduction of TP53 acetylation and activation. In turn, apoptosis induced by DNA damage is inhibited. E6 also protects host keratinocytes from apoptosis by mediating the degradation of host BAK1. May also inhibit host immune response. The chain is Protein E6 from Human papillomavirus 56.